The chain runs to 180 residues: Large ribosomal subunit protein uL10 (180 aa).

This sequence belongs to the universal ribosomal protein uL10 family. In terms of assembly, part of the ribosomal stalk of the 50S ribosomal subunit. The N-terminus interacts with L11 and the large rRNA to form the base of the stalk. The C-terminus forms an elongated spine to which L12 dimers bind in a sequential fashion forming a multimeric L10(L12)X complex.

Its function is as follows. Forms part of the ribosomal stalk, playing a central role in the interaction of the ribosome with GTP-bound translation factors. The polypeptide is Large ribosomal subunit protein uL10 (Thermosipho melanesiensis (strain DSM 12029 / CIP 104789 / BI429)).